The sequence spans 357 residues: Protein-L-isoaspartate O-methyltransferase domain-containing protein 1 (357 aa).

Gly-2 carries N-myristoyl glycine lipidation. Residue Ser-64 is part of the active site. AdoMet binding motif regions lie at residues 85 to 94 (LNLGSGTGYL), 160 to 164 (YDRIY), and 181 to 191 (LKVGGILVMPI). The tract at residues 240–250 (VRNLQDLARIY) is BC-box. The segment at 299-331 (PLDSEEDEKMEEDSKEEEEKEHIEAMKREEPPQ) is disordered. Positions 301–317 (DSEEDEKMEEDSKEEEE) are enriched in acidic residues. The span at 318–331 (KEHIEAMKREEPPQ) shows a compositional bias: basic and acidic residues. A CUL-box region spans residues 341–344 (LPLP).

Belongs to the methyltransferase superfamily. L-isoaspartyl/D-aspartyl protein methyltransferase family. In terms of assembly, component of the probable ECS(PCMTD1) E3 ubiquitin-protein ligase complex, at least composed of CUL5, ELOB, ELOC, RBX2 and PCMTD1. Interacts (via the BC-box) with ELOB and ELOC; the interaction is direct and stabilizes PCMTD1.

The protein resides in the cytoplasm. The protein localises to the membrane. Functionally, substrate recognition component of an ECS (Elongin BC-CUL5-SOCS-box protein) E3 ubiquitin ligase complex which mediates the ubiquitination and subsequent proteasomal degradation of target proteins. Specifically binds to the methyltransferase cofactor S-adenosylmethionine (AdoMet) via the N-terminal AdoMet binding motif, but does not display methyltransferase activity. May provide an alternate maintenance pathway for modified proteins by acting as a damage-specific E3 ubiquitin ligase adaptor protein. This Mus musculus (Mouse) protein is Protein-L-isoaspartate O-methyltransferase domain-containing protein 1 (Pcmtd1).